The chain runs to 202 residues: Probable nicotinate-nucleotide adenylyltransferase (202 aa).

This sequence belongs to the NadD family.

The enzyme catalyses nicotinate beta-D-ribonucleotide + ATP + H(+) = deamido-NAD(+) + diphosphate. The protein operates within cofactor biosynthesis; NAD(+) biosynthesis; deamido-NAD(+) from nicotinate D-ribonucleotide: step 1/1. In terms of biological role, catalyzes the reversible adenylation of nicotinate mononucleotide (NaMN) to nicotinic acid adenine dinucleotide (NaAD). This is Probable nicotinate-nucleotide adenylyltransferase from Clostridium perfringens (strain SM101 / Type A).